The primary structure comprises 842 residues: Elongation factor 2 (842 aa).

Residues 17–346 (ANVRNMSVIA…MIVLHLPSPV (330 aa)) enclose the tr-type G domain. GTP is bound by residues 26–33 (AHVDHGKS), 158–161 (NKVD), and 213–215 (SGL). His699 carries the post-translational modification Diphthamide.

This sequence belongs to the TRAFAC class translation factor GTPase superfamily. Classic translation factor GTPase family. EF-G/EF-2 subfamily.

Its subcellular location is the cytoplasm. It carries out the reaction GTP + H2O = GDP + phosphate + H(+). It participates in protein biosynthesis; polypeptide chain elongation. Functionally, catalyzes the GTP-dependent ribosomal translocation step during translation elongation. During this step, the ribosome changes from the pre-translocational (PRE) to the post-translocational (POST) state as the newly formed A-site-bound peptidyl-tRNA and P-site-bound deacylated tRNA move to the P and E sites, respectively. Catalyzes the coordinated movement of the two tRNA molecules, the mRNA and conformational changes in the ribosome. In Meyerozyma guilliermondii (strain ATCC 6260 / CBS 566 / DSM 6381 / JCM 1539 / NBRC 10279 / NRRL Y-324) (Yeast), this protein is Elongation factor 2 (EFT2).